A 520-amino-acid chain; its full sequence is MSLSILIAGASFIGLLTYYIWIWSFWIRKGVKGPRGFPFFGVIHEFQDYENPGLLKLGEWTKEYGPIYGITEGVEKTLIVSNPEFVHEVFVKQFDNFYGRKTNPIQGDPNKNKRAHLVSAQGHRWKRLRTLSSPTFSNKNLRKIMSTVEETVVELMRHLDDASAKGKAVDLLDYYQEFTLDIIGRIAMGQTESLMFRNPMLPKVKGIFKDGRKLPFLVSGIFPIAGTMFREFFMRFPSIQPAFDIMSTVEKALNKRLEQRAADEKAGIEPSGEPQDFIDLFLDARANVDFFEEESALGFAKTEIAKVDKQLTFDEIIGQLFVFLLAGYDTTALSLSYSSYLLARHPEIQKKLQEEVDRECPNPEVTFDQISKLKYMECVVKEALRMYPLASIVHNRKCMKETNVLGVQIEKGTNVQVDTWTLHYDPKVWGEDANEFRPERWESGDELFYAKGGYLPFGMGPRICIGMRLAMMEKKMLLTHILKKYTFETSTQTEIPLKLVGSATTAPRSVMLKLTPRHSN.

Cys464 lines the heme pocket.

It belongs to the cytochrome P450 family. Heme is required as a cofactor.

In terms of biological role, cytochromes P450 are a group of heme-thiolate monooxygenases. They oxidize a variety of structurally unrelated compounds, including steroids, fatty acids, and xenobiotics. In Caenorhabditis elegans, this protein is Putative cytochrome P450 CYP13A5 (cyp-13A5).